Here is a 678-residue protein sequence, read N- to C-terminus: Growth arrest-specific protein 6 (678 aa).

Residues 1 to 30 form the signal peptide; sequence MAPSLSPGPAALRRAPQLLLLLLAAECALA. Residues 53-94 enclose the Gla domain; it reads FEEAKQGHLERECVEELCSREEAREVFENDPETDYFYPRYLD. Residues cysteine 65 and cysteine 70 are joined by a disulfide bond. At serine 71 the chain carries Phosphoserine; by FAM20C. In terms of domain architecture, EGF-like 1; calcium-binding spans 116–154; it reads LPDQCTPNPCDRKGTQACQDLMGNFFCLCKAGWGGRLCD. 14 cysteine pairs are disulfide-bonded: cysteine 120-cysteine 133, cysteine 125-cysteine 142, cysteine 144-cysteine 153, cysteine 160-cysteine 171, cysteine 167-cysteine 180, cysteine 182-cysteine 195, cysteine 201-cysteine 212, cysteine 207-cysteine 221, cysteine 223-cysteine 236, cysteine 242-cysteine 251, cysteine 247-cysteine 260, cysteine 262-cysteine 277, cysteine 283-cysteine 570, and cysteine 444-cysteine 470. The region spanning 156–196 is the EGF-like 2; calcium-binding domain; the sequence is DVNECSQENGGCLQICHNKPGSFHCSCHSGFELSSDGRTCQ. The EGF-like 3; calcium-binding domain occupies 197–237; the sequence is DIDECADSEACGEARCKNLPGSYSCLCDEGFAYSSQEKACR. The EGF-like 4; calcium-binding domain occupies 238-278; sequence DVDECLQGRCEQVCVNSPGSYTCHCDGRGGLKLSQDMDTCE. 2 consecutive Laminin G-like domains span residues 298–470 and 477–670; these read GRMF…RMQC and GSFY…AHSC. Aspartate 329 and glutamate 331 together coordinate Ca(2+). N-linked (GlcNAc...) asparagine glycosylation is present at asparagine 420. Residue arginine 440 participates in Ca(2+) binding. Threonine 621 and threonine 637 each carry phosphothreonine. Tyrosine 640 is subject to Phosphotyrosine. A disulfide bridge connects residues cysteine 643 and cysteine 670. A Ca(2+)-binding site is contributed by aspartate 656.

Heterodimer and heterotetramer with AXL. In terms of processing, proteolytically processed after secretion to yield a N-terminal 36 kDa protein and a C-terminal 50 kDa protein including the laminin G-like domains which activates AXL. Post-translationally, gamma-carboxyglutamate residues are formed by vitamin K dependent carboxylation. These residues are essential for the binding of calcium. In terms of tissue distribution, plasma. Isoform 1 and isoform 2 are widely expressed, isoform 1 being expressed at higher levels than isoform 2 in most tissues. Isoform 2 is the predominant form in spleen.

It is found in the secreted. Its function is as follows. Ligand for tyrosine-protein kinase receptors AXL, TYRO3 and MER whose signaling is implicated in cell growth and survival, cell adhesion and cell migration. GAS6/AXL signaling plays a role in various processes such as endothelial cell survival during acidification by preventing apoptosis, optimal cytokine signaling during human natural killer cell development, hepatic regeneration, gonadotropin-releasing hormone neuron survival and migration, platelet activation, or regulation of thrombotic responses. (Microbial infection) Can bridge virus envelope phosphatidylserine to the TAM receptor tyrosine kinase Axl to mediate viral entry by apoptotic mimicry. Plays a role in Dengue cell entry by apoptotic mimicry. Plays a role in Vaccinia virus cell entry by apoptotic mimicry. Plays a role in ebolavirus and marburgvirus cell entry by apoptotic mimicry. The protein is Growth arrest-specific protein 6 of Homo sapiens (Human).